Here is a 327-residue protein sequence, read N- to C-terminus: GTP 3',8-cyclase (327 aa).

Residues 4 to 226 form the Radical SAM core domain; sequence AFARDIHYLR…LRLGDHPGIR (223 aa). Position 13 (Arg-13) interacts with GTP. [4Fe-4S] cluster-binding residues include Cys-20 and Cys-24. An S-adenosyl-L-methionine-binding site is contributed by Tyr-26. Cys-27 is a [4Fe-4S] cluster binding site. Arg-63 contributes to the GTP binding site. Gly-67 provides a ligand contact to S-adenosyl-L-methionine. Thr-94 is a binding site for GTP. Ser-118 provides a ligand contact to S-adenosyl-L-methionine. GTP is bound at residue Lys-155. Met-189 contacts S-adenosyl-L-methionine. Residues Cys-254 and Cys-257 each coordinate [4Fe-4S] cluster. Residue 259-261 participates in GTP binding; the sequence is RLR. Cys-271 lines the [4Fe-4S] cluster pocket.

Belongs to the radical SAM superfamily. MoaA family. As to quaternary structure, monomer and homodimer. It depends on [4Fe-4S] cluster as a cofactor.

It carries out the reaction GTP + AH2 + S-adenosyl-L-methionine = (8S)-3',8-cyclo-7,8-dihydroguanosine 5'-triphosphate + 5'-deoxyadenosine + L-methionine + A + H(+). Its pathway is cofactor biosynthesis; molybdopterin biosynthesis. In terms of biological role, catalyzes the cyclization of GTP to (8S)-3',8-cyclo-7,8-dihydroguanosine 5'-triphosphate. In Heliobacterium modesticaldum (strain ATCC 51547 / Ice1), this protein is GTP 3',8-cyclase.